The primary structure comprises 227 residues: Cytochrome c oxidase subunit 2 (227 aa).

The Mitochondrial intermembrane segment spans residues methionine 1–serine 14. A helical transmembrane segment spans residues proline 15–methionine 45. Residues leucine 46–glutamine 59 are Mitochondrial matrix-facing. A helical transmembrane segment spans residues glutamate 60–methionine 87. Residues aspartate 88–leucine 227 lie on the Mitochondrial intermembrane side of the membrane. The Cu cation site is built by histidine 161, cysteine 196, glutamate 198, cysteine 200, histidine 204, and methionine 207. Residue glutamate 198 participates in Mg(2+) binding.

It belongs to the cytochrome c oxidase subunit 2 family. In terms of assembly, component of the cytochrome c oxidase (complex IV, CIV), a multisubunit enzyme composed of 14 subunits. The complex is composed of a catalytic core of 3 subunits MT-CO1, MT-CO2 and MT-CO3, encoded in the mitochondrial DNA, and 11 supernumerary subunits COX4I, COX5A, COX5B, COX6A, COX6B, COX6C, COX7A, COX7B, COX7C, COX8 and NDUFA4, which are encoded in the nuclear genome. The complex exists as a monomer or a dimer and forms supercomplexes (SCs) in the inner mitochondrial membrane with NADH-ubiquinone oxidoreductase (complex I, CI) and ubiquinol-cytochrome c oxidoreductase (cytochrome b-c1 complex, complex III, CIII), resulting in different assemblies (supercomplex SCI(1)III(2)IV(1) and megacomplex MCI(2)III(2)IV(2)). Found in a complex with TMEM177, COA6, COX18, COX20, SCO1 and SCO2. Interacts with TMEM177 in a COX20-dependent manner. Interacts with COX20. Interacts with COX16. It depends on Cu cation as a cofactor.

It localises to the mitochondrion inner membrane. It catalyses the reaction 4 Fe(II)-[cytochrome c] + O2 + 8 H(+)(in) = 4 Fe(III)-[cytochrome c] + 2 H2O + 4 H(+)(out). Its function is as follows. Component of the cytochrome c oxidase, the last enzyme in the mitochondrial electron transport chain which drives oxidative phosphorylation. The respiratory chain contains 3 multisubunit complexes succinate dehydrogenase (complex II, CII), ubiquinol-cytochrome c oxidoreductase (cytochrome b-c1 complex, complex III, CIII) and cytochrome c oxidase (complex IV, CIV), that cooperate to transfer electrons derived from NADH and succinate to molecular oxygen, creating an electrochemical gradient over the inner membrane that drives transmembrane transport and the ATP synthase. Cytochrome c oxidase is the component of the respiratory chain that catalyzes the reduction of oxygen to water. Electrons originating from reduced cytochrome c in the intermembrane space (IMS) are transferred via the dinuclear copper A center (CU(A)) of subunit 2 and heme A of subunit 1 to the active site in subunit 1, a binuclear center (BNC) formed by heme A3 and copper B (CU(B)). The BNC reduces molecular oxygen to 2 water molecules using 4 electrons from cytochrome c in the IMS and 4 protons from the mitochondrial matrix. The polypeptide is Cytochrome c oxidase subunit 2 (MT-CO2) (Tamias townsendii (Townsend's chipmunk)).